A 344-amino-acid polypeptide reads, in one-letter code: MENWINVNNASEDIVLSSRIRLARNLKGIPFPNKLTVDSAKDVVEKVENAIFTIPDLKDNLKSNHLWENDNETNKMYLEKHLISRGLIKHAKGSAFLIDNDETISIMINEEDHLRLQTITSGLNFKEVFKSINELDDLLEENLEYAFHEKLGYITACPTNLGTGLRASAMVHLPALTANKDIVKILNGITQLGMTIRGLYGEGSKAYGNLYQISNQITLGRAEEQIITSLEGIVKQIIQQERLARERMKTKYKYEVEDKIFRSLGVLKSARILTAREVLNLLSNVRLGVEEGIISNIDKSILNNLLINTQSASIKKSSQKKLTDIEEKIERAKIVKEGLKGIEL.

Residues 14–244 (IVLSSRIRLA…KQIIQQERLA (231 aa)) form the Phosphagen kinase C-terminal domain. ATP-binding positions include 17 to 21 (SSRIR), H81, R115, 166 to 170 (RASAM), and 197 to 202 (RGLYGE).

This sequence belongs to the ATP:guanido phosphotransferase family.

It catalyses the reaction L-arginyl-[protein] + ATP = N(omega)-phospho-L-arginyl-[protein] + ADP + H(+). Functionally, catalyzes the specific phosphorylation of arginine residues in proteins. The protein is Protein-arginine kinase of Clostridium novyi (strain NT).